We begin with the raw amino-acid sequence, 89 residues long: Small ribosomal subunit protein uS15 (89 aa).

Belongs to the universal ribosomal protein uS15 family. As to quaternary structure, part of the 30S ribosomal subunit. Forms a bridge to the 50S subunit in the 70S ribosome, contacting the 23S rRNA.

One of the primary rRNA binding proteins, it binds directly to 16S rRNA where it helps nucleate assembly of the platform of the 30S subunit by binding and bridging several RNA helices of the 16S rRNA. Functionally, forms an intersubunit bridge (bridge B4) with the 23S rRNA of the 50S subunit in the ribosome. The protein is Small ribosomal subunit protein uS15 of Marinomonas sp. (strain MWYL1).